Here is a 2633-residue protein sequence, read N- to C-terminus: Non-reducing polyketide synthase sor2 (2633 aa).

The tract at residues 67 to 237 (VSNAQKLAEW…TTSTRTVAAL (171 aa)) is N-terminal acylcarrier protein transacylase domain (SAT). Catalysis depends on Cys140, which acts as the Nucleophile; for transacylase activity. His258 (proton donor/acceptor; for transacylase activity) is an active-site residue. One can recognise a Ketosynthase family 3 (KS3) domain in the interval 389–814 (ENDIAVIGMA…GSNASVIIKQ (426 aa)). Active-site for beta-ketoacyl synthase activity residues include Cys561, His696, and His737. A malonyl-CoA:ACP transacylase (MAT) domain region spans residues 928-1239 (CFGGQVSTFV…SKASSQLSDV (312 aa)). The N-terminal hotdog fold stretch occupies residues 1307–1437 (PQPVGLYTLL…GQLHFQASDD (131 aa)). Residues 1307-1627 (PQPVGLYTLL…YAPVSLDQLF (321 aa)) enclose the PKS/mFAS DH domain. The product template (PT) domain stretch occupies residues 1338–1509 (MSDHAIGKAQ…SNESAGRLVR (172 aa)). Positions 1464-1627 (GRSDEVIQGQ…YAPVSLDQLF (164 aa)) are C-terminal hotdog fold. One can recognise a Carrier domain in the interval 1684 to 1758 (EELWLRLRPV…GILKFLQSTL (75 aa)). An O-(pantetheine 4'-phosphoryl)serine modification is found at Ser1718. The tract at residues 1762–1792 (DVHDSSETMSTVSSDGNVHSPPTSGSEMASP) is disordered. Polar residues predominate over residues 1768–1790 (ETMSTVSSDGNVHSPPTSGSEMA). The segment at 1982–2166 (FELMADFLTR…ASGFKHVRWT (185 aa)) is methyltransferase domain. Residues 2253–2495 (VTGATGSLGS…TLRALPDVDG (243 aa)) form an NADPH-binding (R) domain region.

Pantetheine 4'-phosphate is required as a cofactor.

The protein operates within secondary metabolite biosynthesis. Functionally, non-reducing polyketide synthase; part of the SOR gene cluster that mediates the biosynthesis of sorbicillinoids, a diverse group of yellow secondary metabolites that restrict growth of competing pathogenic fungi but not of bacteria. Sorbicillinoids biosynthesis requires the action of two PKSs. The SOR cluster is required for the production of trichodimerol and dihydrotrichotetronin, with sor2 being sufficient for production of trichodimerol, but not dihydrotrichotetronin in the light. Sor1 iteratively combines three acetyl units and the growing chain is modified by the ketoacyl reductase subunit, and optional by the enoyl reductase subunit in the second cycle. The polyketide is then handed over to the PKS sor2, which adds three more acetyl units, and two methyl groups. Sor2 releases an aldehyde, which undergoes spontaneous cyclization resulting in the formation of sorbicillin or 2',3'-dihydrosorbicillin. The monooxygenase sor5 oxidizes sorbicillin and 2',3'-dihydrosorbicillin to 2',3'-dihydrosorbicillinol and sorbicillinol, respectively. The oxidoreductase sor8 further converts sorbicillinol into oxosorbicillinol. Sorbicillinol is the building block for the other sorbicillinoids such as disorbicillinol, bisvertinolon, dihydrobisvertinolone, and dihydrotrichotetronine. In Hypocrea jecorina (strain QM6a) (Trichoderma reesei), this protein is Non-reducing polyketide synthase sor2.